A 43-amino-acid polypeptide reads, in one-letter code: DRDSCVDKSKCGKYGYYGQCDECCKKAGDRAGICEYYKCKCNP.

4 disulfide bridges follow: Cys5/Cys23, Cys11/Cys34, Cys20/Cys39, and Cys24/Cys41.

It belongs to the ergtoxin family. Gamma-KTx 4 subfamily. Expressed by the venom gland.

The protein localises to the secreted. Reversibly blocks Kv11/ERG potassium channels. The polypeptide is Potassium channel toxin gamma-KTx 4.3 (Centruroides exilicauda (Bark scorpion)).